We begin with the raw amino-acid sequence, 173 residues long: Adenine phosphoribosyltransferase (173 aa).

This sequence belongs to the purine/pyrimidine phosphoribosyltransferase family. As to quaternary structure, homodimer.

The protein resides in the cytoplasm. It carries out the reaction AMP + diphosphate = 5-phospho-alpha-D-ribose 1-diphosphate + adenine. Its pathway is purine metabolism; AMP biosynthesis via salvage pathway; AMP from adenine: step 1/1. Its function is as follows. Catalyzes a salvage reaction resulting in the formation of AMP, that is energically less costly than de novo synthesis. In Chloroflexus aurantiacus (strain ATCC 29366 / DSM 635 / J-10-fl), this protein is Adenine phosphoribosyltransferase.